The sequence spans 283 residues: 2-dehydro-3-deoxyphosphooctonate aldolase (283 aa).

This sequence belongs to the KdsA family.

It is found in the cytoplasm. The enzyme catalyses D-arabinose 5-phosphate + phosphoenolpyruvate + H2O = 3-deoxy-alpha-D-manno-2-octulosonate-8-phosphate + phosphate. Its pathway is carbohydrate biosynthesis; 3-deoxy-D-manno-octulosonate biosynthesis; 3-deoxy-D-manno-octulosonate from D-ribulose 5-phosphate: step 2/3. The protein operates within bacterial outer membrane biogenesis; lipopolysaccharide biosynthesis. This Parasynechococcus marenigrum (strain WH8102) protein is 2-dehydro-3-deoxyphosphooctonate aldolase.